A 447-amino-acid chain; its full sequence is Serine/threonine-protein phosphatase 2A 55 kDa regulatory subunit B alpha isoform (447 aa).

A2 carries the post-translational modification N-acetylalanine. WD repeat units lie at residues Q11–H80, E94–N174, A175–K218, E227–E270, I288–V325, E347–A381, and D414–V446.

Belongs to the phosphatase 2A regulatory subunit B family. In terms of assembly, PP2A consists of a common heterodimeric core enzyme, composed of a 36 kDa catalytic subunit (subunit C) and a 65 kDa constant regulatory subunit (PR65 or subunit A), that associates with a variety of regulatory subunits. Proteins that associate with the core dimer include three families of regulatory subunits B (the R2/B/PR55/B55, R3/B''/PR72/PR130/PR59 and R5/B'/B56 families), the 48 kDa variable regulatory subunit, viral proteins, and cell signaling molecules. Interacts with the PP2A C catalytic subunit PPP2CA. Interacts with the PP2A A subunit PPP2R1A. Found in a complex with at least ARL2, PPP2CB, PPP2R1A, PPP2R2A, PPP2R5E and TBCD. Interacts with MFHAS1; the interaction is direct. Interacts with PABIR1/FAM122A (via its N-terminus); the interaction is direct and inhibits PP2A activity. Interacts with ARPP19; the interaction is direct and inhibits PP2A activity. Interacts with CRTC3. As to expression, brain.

Its function is as follows. Substrate-recognition subunit of protein phosphatase 2A (PP2A) that plays a key role in cell cycle by controlling mitosis entry and exit. Involved in chromosome clustering during late mitosis by mediating dephosphorylation of MKI67. Essential for serine/threonine-protein phosphatase 2A-mediated dephosphorylation of WEE1, preventing its ubiquitin-mediated proteolysis, increasing WEE1 protein levels, and promoting the G2/M checkpoint. The chain is Serine/threonine-protein phosphatase 2A 55 kDa regulatory subunit B alpha isoform (Ppp2r2a) from Rattus norvegicus (Rat).